The chain runs to 325 residues: Tetraacyldisaccharide 4'-kinase (325 aa).

53–60 (SVGGNGKT) provides a ligand contact to ATP.

This sequence belongs to the LpxK family.

The enzyme catalyses a lipid A disaccharide + ATP = a lipid IVA + ADP + H(+). It functions in the pathway glycolipid biosynthesis; lipid IV(A) biosynthesis; lipid IV(A) from (3R)-3-hydroxytetradecanoyl-[acyl-carrier-protein] and UDP-N-acetyl-alpha-D-glucosamine: step 6/6. In terms of biological role, transfers the gamma-phosphate of ATP to the 4'-position of a tetraacyldisaccharide 1-phosphate intermediate (termed DS-1-P) to form tetraacyldisaccharide 1,4'-bis-phosphate (lipid IVA). In Pasteurella multocida (strain Pm70), this protein is Tetraacyldisaccharide 4'-kinase.